Consider the following 200-residue polypeptide: Mediator of RNA polymerase II transcription subunit 29 (200 aa).

Low complexity-rich tracts occupy residues 1-21 (MAAS…SGPS) and 36-48 (AQLV…GLLQ). Positions 1–48 (MAASQQQASAASSAAGVSGPSSAGGPGPQQQPQPPAQLVGPAQSGLLQ) are disordered. Ala2 bears the N-acetylalanine mark.

It belongs to the Mediator complex subunit 29 family. As to quaternary structure, component of the Mediator complex, which is composed of MED1, MED4, MED6, MED7, MED8, MED9, MED10, MED11, MED12, MED13, MED13L, MED14, MED15, MED16, MED17, MED18, MED19, MED20, MED21, MED22, MED23, MED24, MED25, MED26, MED27, MED29, MED30, MED31, CCNC, CDK8 and CDC2L6/CDK11. The MED12, MED13, CCNC and CDK8 subunits form a distinct module termed the CDK8 module. Mediator containing the CDK8 module is less active than Mediator lacking this module in supporting transcriptional activation. Individual preparations of the Mediator complex lacking one or more distinct subunits have been variously termed ARC, CRSP, DRIP, PC2, SMCC and TRAP. Associates with the MED18/MED20 heteromer.

The protein resides in the nucleus. In terms of biological role, component of the Mediator complex, a coactivator involved in the regulated transcription of nearly all RNA polymerase II-dependent genes. Mediator functions as a bridge to convey information from gene-specific regulatory proteins to the basal RNA polymerase II transcription machinery. Mediator is recruited to promoters by direct interactions with regulatory proteins and serves as a scaffold for the assembly of a functional preinitiation complex with RNA polymerase II and the general transcription factors. The sequence is that of Mediator of RNA polymerase II transcription subunit 29 (MED29) from Pongo abelii (Sumatran orangutan).